The following is a 542-amino-acid chain: Importin subunit alpha (542 aa).

Met1 carries the post-translational modification N-acetylmethionine. Polar residues predominate over residues 1-11 (MDNGTDSSTSK). The IBB domain occupies 1–65 (MDNGTDSSTS…RNFIPPTDGA (65 aa)). The disordered stretch occupies residues 1 to 77 (MDNGTDSSTS…DEEDESSVSA (77 aa)). Residues 27 to 53 (FSADELRRRRDTQQVELRKAKRDEALA) are compositionally biased toward basic and acidic residues. An ARM 1; truncated repeat occupies 89–122 (LPQMTQQLNSDDMQEQLSATVKFRQILSREHRPP). 8 ARM repeats span residues 123-162 (IDVV…ASGT), 163-204 (SAQT…AGDS), 205-251 (TDYR…PQPD), 252-288 (WSVV…SDGP), 289-330 (QEAI…VTGN), 331-372 (DLQT…TAGN), 373-417 (TEQI…GLQR), and 418-471 (PDII…LNIN). Residues 209–335 (DYVLQCNAME…IVTGNDLQTQ (127 aa)) form an NLS binding site 1 region. Positions 419 to 505 (DIIRYLVSQG…KIYEKAYKII (87 aa)) are NLS binding site 2. An ARM 10; atypical repeat occupies 472–508 (ENADFIEKAGGMEKIFNCQQNENDKIYEKAYKIIETY).

The protein belongs to the importin alpha family. As to quaternary structure, forms a complex with an importin beta subunit. In the nucleus, interacts with NUP2 which accelerate release of NLSs, NUP2 is subsequently displaced by CSE1:RanGTP which mediates re-export and recycling. Interacts with HEH2, SHE2, and STS1.

It is found in the cytoplasm. Its subcellular location is the perinuclear region. In terms of biological role, functions in nuclear protein import as an adapter protein for importin beta nuclear receptors. Binds specifically and directly to substrates containing either a simple or bipartite NLS motif. Promotes docking of import substrates to the nuclear envelope. Together with importin beta KAP95, mediates nuclear import of transcription factor GCN4. Together with tethering factor STS1, targets the proteasome to the nucleus. The chain is Importin subunit alpha (SRP1) from Saccharomyces cerevisiae (strain ATCC 204508 / S288c) (Baker's yeast).